A 339-amino-acid polypeptide reads, in one-letter code: D-erythrose-4-phosphate dehydrogenase (339 aa).

Residues 12-13 (RI) and Arg81 contribute to the NAD(+) site. Substrate contacts are provided by residues 154-156 (SCT), Arg200, 213-214 (TK), and Arg236. The active-site Nucleophile is Cys155. An NAD(+)-binding site is contributed by Asn318.

Belongs to the glyceraldehyde-3-phosphate dehydrogenase family. Epd subfamily. As to quaternary structure, homotetramer.

Its subcellular location is the cytoplasm. It catalyses the reaction D-erythrose 4-phosphate + NAD(+) + H2O = 4-phospho-D-erythronate + NADH + 2 H(+). It participates in cofactor biosynthesis; pyridoxine 5'-phosphate biosynthesis; pyridoxine 5'-phosphate from D-erythrose 4-phosphate: step 1/5. Functionally, catalyzes the NAD-dependent conversion of D-erythrose 4-phosphate to 4-phosphoerythronate. The protein is D-erythrose-4-phosphate dehydrogenase of Escherichia coli O45:K1 (strain S88 / ExPEC).